The following is a 785-amino-acid chain: Potassium transporter 5 (785 aa).

Residues 1 to 60 (MDGEEHQIDGDEVNNHENKLNEKKKSWGKLYRPDSFIIEAGQTPTNTGRRSLMSWRTTMS) are Cytoplasmic-facing. A Phosphoserine modification is found at Ser-35. The helical transmembrane segment at 61–81 (LAFQSLGVVYGDIGTSPLYVY) threads the bilayer. Residues 82–97 (ASTFTDGINDKDDVVG) lie on the Extracellular side of the membrane. The helical transmembrane segment at 98–118 (VLSLIIYTITLVALLKYVFIV) threads the bilayer. Residues 119-184 (LQANDNGEGG…EKLENSKFAK (66 aa)) lie on the Cytoplasmic side of the membrane. The chain crosses the membrane as a helical span at residues 185-205 (IILFLVTIMGTSMVIGDGILT). Residues 206 to 218 (PSISVLSAVSGIK) lie on the Extracellular side of the membrane. The chain crosses the membrane as a helical span at residues 219–239 (SLGQNTVVGVSVAILIVLFAF). Residues 240 to 247 (QRFGTDKV) are Cytoplasmic-facing. Residues 248–268 (GFSFAPIILVWFTFLIGIGLF) form a helical membrane-spanning segment. Residues 269 to 297 (NLFKHDITVLKALNPLYIIYYFRRTGRQG) lie on the Extracellular side of the membrane. Residues 298 to 318 (WISLGGVFLCITGTEAMFADL) traverse the membrane as a helical segment. Residues 319 to 327 (GHFSVRAVQ) are Cytoplasmic-facing. Residues 328-348 (ISFSCVAYPALVTIYCGQAAY) traverse the membrane as a helical segment. The Extracellular segment spans residues 349–367 (LTKHTYNVSNTFYDSIPDP). N-linked (GlcNAc...) asparagine glycosylation is present at Asn-355. Residues 368–388 (LYWPTFVVAVAASIIASQAMI) traverse the membrane as a helical segment. At 389-419 (SGAFSVISQSLRMGCFPRVKVVHTSAKYEGQ) the chain is on the cytoplasmic side. A helical membrane pass occupies residues 420 to 440 (VYIPEINYLLMLACIAVTLAF). Topologically, residues 441-451 (RTTEKIGHAYG) are extracellular. A helical membrane pass occupies residues 452 to 472 (IAVVTVMVITTLMVTLIMLVI). Over 473 to 476 (WKTN) the chain is Cytoplasmic. Residues 477–497 (IVWIAIFLVVFGSIEMLYLSS) form a helical membrane-spanning segment. Topologically, residues 498–501 (VMYK) are extracellular. The helical transmembrane segment at 502–522 (FTSGGYLPLTITVVLMAMMAI) threads the bilayer. Residues 523–785 (WQYVHVLKYR…LLKVGMTYEL (263 aa)) lie on the Cytoplasmic side of the membrane. The segment at 660–699 (GGEVDETDKEEEPNAETTVVPSSNYVPSSGRIGSAHSSSS) is disordered. Positions 662 to 673 (EVDETDKEEEPN) are enriched in acidic residues. The segment covering 674–686 (AETTVVPSSNYVP) has biased composition (polar residues). Residues 687 to 697 (SSGRIGSAHSS) show a composition bias toward low complexity.

It belongs to the HAK/KUP transporter (TC 2.A.72.3) family. Interacts with ILK1. In terms of processing, phosphorylated at the N-terminus (amino acids 1-95) by CIPK23. As to expression, predominantly expressed in the roots.

It localises to the cell membrane. Functionally, high-affinity potassium transporter. Can also transport rubidium and cesium. Is essential with AKT1 for high-affinity potassium uptake in roots during seedling establishment and postgermination growth under low potassium conditions. Mediates potassium uptake by plant roots in response to low potassium conditions, by a calcium-, CBL-, and CIPK-dependent pathway. Positively regulated by the calcium sensors calcineurin B-like genes CBL1, CBL8, CBL9 and CBL10, and by phosphorylation by CIPK23. The protein is Potassium transporter 5 (POT5) of Arabidopsis thaliana (Mouse-ear cress).